The following is a 526-amino-acid chain: Peptide chain release factor 3 (526 aa).

A tr-type G domain is found at 8 to 277; the sequence is GKRRTFAIIS…GLTEWAPAPQ (270 aa). Residues 17-24, 85-89, and 139-142 each bind GTP; these read SHPDAGKT, DTPGH, and NKMD.

The protein belongs to the TRAFAC class translation factor GTPase superfamily. Classic translation factor GTPase family. PrfC subfamily.

Its subcellular location is the cytoplasm. Functionally, increases the formation of ribosomal termination complexes and stimulates activities of RF-1 and RF-2. It binds guanine nucleotides and has strong preference for UGA stop codons. It may interact directly with the ribosome. The stimulation of RF-1 and RF-2 is significantly reduced by GTP and GDP, but not by GMP. The polypeptide is Peptide chain release factor 3 (Aliivibrio salmonicida (strain LFI1238) (Vibrio salmonicida (strain LFI1238))).